The sequence spans 1525 residues: Dicer-like protein 1 (1525 aa).

Acidic residues predominate over residues 37–52; it reads DLQEDDGSSDESDNDE. Positions 37-65 are disordered; the sequence is DLQEDDGSSDESDNDEREDHSKTGVSQQR. Residues 124–305 enclose the Helicase ATP-binding domain; it reads LFERAKVQNT…DEATRLEKLL (182 aa). 137 to 144 contacts ATP; it reads LDTGSGKT. A DEAH box motif is present at residues 250–253; it reads DEAH. Residues 439–605 enclose the Helicase C-terminal domain; sequence QLSPKVQVLR…SFCRTLPEDR (167 aa). One can recognise a Dicer dsRNA-binding fold domain in the interval 641-731; the sequence is ATAILARYAS…NSIYHRRLPA (91 aa). The region spanning 881–1009 is the PAZ domain; sequence ESLTYVRDND…ICIEPLKVSA (129 aa). RNase III domains lie at 1032–1192 and 1243–1394; these read LISL…LSGG and SRKI…VDSD. Residues Glu-1283, Asp-1380, and Glu-1383 each contribute to the Mg(2+) site. A DRBM domain is found at 1428–1496; sequence TFLHNRLTNE…SEKALAVLDE (69 aa). Residues Cys-1440, His-1467, Cys-1508, and Cys-1510 each contribute to the Zn(2+) site.

Belongs to the helicase family. Dicer subfamily. Requires Mg(2+) as cofactor. The cofactor is Mn(2+).

In terms of biological role, dicer-like endonuclease involved in cleaving double-stranded RNA in the RNA interference (RNAi) pathway. Produces 21 to 25 bp dsRNAs (siRNAs) which target the selective destruction of homologous RNAs leading to sequence-specific suppression of gene expression, called post-transcriptional gene silencing (PTGS). Part of a broad host defense response against viral infection and transposons. The sequence is that of Dicer-like protein 1 (dcl1) from Aspergillus niger (strain ATCC MYA-4892 / CBS 513.88 / FGSC A1513).